The sequence spans 274 residues: Large ribosomal subunit protein uL2 (274 aa).

Disordered stretches follow at residues 28-55 and 224-274; these read APHA…RHVG and VAMN…RRRK. Basic and acidic residues predominate over residues 263–274; the sequence is KRTDKMIVRRRK.

It belongs to the universal ribosomal protein uL2 family. Part of the 50S ribosomal subunit. Forms a bridge to the 30S subunit in the 70S ribosome.

Its function is as follows. One of the primary rRNA binding proteins. Required for association of the 30S and 50S subunits to form the 70S ribosome, for tRNA binding and peptide bond formation. It has been suggested to have peptidyltransferase activity; this is somewhat controversial. Makes several contacts with the 16S rRNA in the 70S ribosome. The protein is Large ribosomal subunit protein uL2 of Pseudomonas fluorescens (strain ATCC BAA-477 / NRRL B-23932 / Pf-5).